Consider the following 103-residue polypeptide: Large ribosomal subunit protein bL21 (103 aa).

It belongs to the bacterial ribosomal protein bL21 family. Part of the 50S ribosomal subunit. Contacts protein L20.

This protein binds to 23S rRNA in the presence of protein L20. The polypeptide is Large ribosomal subunit protein bL21 (Alteromonas mediterranea (strain DSM 17117 / CIP 110805 / LMG 28347 / Deep ecotype)).